The chain runs to 233 residues: Methylthioribulose-1-phosphate dehydratase (233 aa).

Cysteine 91 contributes to the substrate binding site. Positions 108 and 110 each coordinate Zn(2+). Residue glutamate 137 is the Proton donor/acceptor of the active site. Histidine 194 provides a ligand contact to Zn(2+).

The protein belongs to the aldolase class II family. MtnB subfamily. The cofactor is Zn(2+).

The protein localises to the cytoplasm. The catalysed reaction is 5-(methylsulfanyl)-D-ribulose 1-phosphate = 5-methylsulfanyl-2,3-dioxopentyl phosphate + H2O. It participates in amino-acid biosynthesis; L-methionine biosynthesis via salvage pathway; L-methionine from S-methyl-5-thio-alpha-D-ribose 1-phosphate: step 2/6. Its function is as follows. Catalyzes the dehydration of methylthioribulose-1-phosphate (MTRu-1-P) into 2,3-diketo-5-methylthiopentyl-1-phosphate (DK-MTP-1-P). The sequence is that of Methylthioribulose-1-phosphate dehydratase from Phaeosphaeria nodorum (strain SN15 / ATCC MYA-4574 / FGSC 10173) (Glume blotch fungus).